We begin with the raw amino-acid sequence, 155 residues long: SsrA-binding protein (155 aa).

This sequence belongs to the SmpB family.

The protein resides in the cytoplasm. Functionally, required for rescue of stalled ribosomes mediated by trans-translation. Binds to transfer-messenger RNA (tmRNA), required for stable association of tmRNA with ribosomes. tmRNA and SmpB together mimic tRNA shape, replacing the anticodon stem-loop with SmpB. tmRNA is encoded by the ssrA gene; the 2 termini fold to resemble tRNA(Ala) and it encodes a 'tag peptide', a short internal open reading frame. During trans-translation Ala-aminoacylated tmRNA acts like a tRNA, entering the A-site of stalled ribosomes, displacing the stalled mRNA. The ribosome then switches to translate the ORF on the tmRNA; the nascent peptide is terminated with the 'tag peptide' encoded by the tmRNA and targeted for degradation. The ribosome is freed to recommence translation, which seems to be the essential function of trans-translation. This chain is SsrA-binding protein, found in Geobacillus sp. (strain WCH70).